The sequence spans 964 residues: Syndetin (964 aa).

Position 1 is an N-acetylmethionine (Met1). Residues 1-25 are disordered; the sequence is MQKIKSLMTRQGLKSPPESLNDLGA. Ser15 bears the Phosphoserine mark. Coiled-coil stretches lie at residues 81 to 107 and 216 to 244; these read LNLQELEEYRDKLKQQQSAVSKKVADL and YSCISELNSKLQDTLEQIEEQLDVALSKI. Residues Ser494, Ser498, Ser559, and Ser561 each carry the phosphoserine modification. The segment at 532–563 is disordered; sequence DEETEDVLASNGYESDEQEKSAYQDYDSDSDV. A Glycyl lysine isopeptide (Lys-Gly) (interchain with G-Cter in SUMO1); alternate cross-link involves residue Lys963. Lys963 is covalently cross-linked (Glycyl lysine isopeptide (Lys-Gly) (interchain with G-Cter in SUMO2); alternate).

The protein belongs to the syndetin family. In terms of assembly, component of the endosome-associated retrograde protein (EARP) complex, composed of VPS51, VPS52, VPS53 and VPS50/Syndetin. The EARP complex interacts with EIPR1. Interacts with VPS51 and VPS53 in an EIPR1-independent manner.

It localises to the recycling endosome. The protein localises to the membrane. Functionally, acts as a component of the EARP complex that is involved in endocytic recycling. The EARP complex associates with Rab4-positive endosomes and promotes recycling of internalized transferrin receptor (TFRC) to the plasma membrane. Within the EARP complex, required to tether the complex to recycling endosomes. Not involved in retrograde transport from early and late endosomes to the trans-Golgi network (TGN). In Mus musculus (Mouse), this protein is Syndetin.